Here is a 63-residue protein sequence, read N- to C-terminus: Large ribosomal subunit protein bL28 (63 aa).

The disordered stretch occupies residues 1–21 (MSRRDDLTGKGPMFGNNRSHA).

The protein belongs to the bacterial ribosomal protein bL28 family.

This is Large ribosomal subunit protein bL28 from Mycoplasmopsis pulmonis (strain UAB CTIP) (Mycoplasma pulmonis).